The primary structure comprises 273 residues: UPF0380 protein YafZ (273 aa).

It belongs to the UPF0380 family.

The polypeptide is UPF0380 protein YafZ (yafZ) (Escherichia coli (strain K12)).